A 470-amino-acid chain; its full sequence is Ribulose bisphosphate carboxylase large chain (470 aa).

Substrate is bound by residues asparagine 115 and threonine 165. Lysine 167 acts as the Proton acceptor in catalysis. Lysine 169 is a binding site for substrate. 3 residues coordinate Mg(2+): lysine 193, aspartate 195, and glutamate 196. Lysine 193 is modified (N6-carboxylysine). Histidine 286 functions as the Proton acceptor in the catalytic mechanism. 3 residues coordinate substrate: arginine 287, histidine 319, and serine 371.

Belongs to the RuBisCO large chain family. Type I subfamily. As to quaternary structure, heterohexadecamer of 8 large chains and 8 small chains. The cofactor is Mg(2+).

It is found in the carboxysome. It catalyses the reaction 2 (2R)-3-phosphoglycerate + 2 H(+) = D-ribulose 1,5-bisphosphate + CO2 + H2O. The catalysed reaction is D-ribulose 1,5-bisphosphate + O2 = 2-phosphoglycolate + (2R)-3-phosphoglycerate + 2 H(+). RuBisCO catalyzes two reactions: the carboxylation of D-ribulose 1,5-bisphosphate, the primary event in carbon dioxide fixation, as well as the oxidative fragmentation of the pentose substrate in the photorespiration process. Both reactions occur simultaneously and in competition at the same active site. This is Ribulose bisphosphate carboxylase large chain from Prochlorococcus marinus (strain SARG / CCMP1375 / SS120).